A 203-amino-acid chain; its full sequence is Protein GrpE (203 aa).

Over residues 1-10 (MSNESIKAEQ) the composition is skewed to basic and acidic residues. The disordered stretch occupies residues 1–20 (MSNESIKAEQDLIQEGVESE).

Belongs to the GrpE family. As to quaternary structure, homodimer.

It localises to the cytoplasm. Functionally, participates actively in the response to hyperosmotic and heat shock by preventing the aggregation of stress-denatured proteins, in association with DnaK and GrpE. It is the nucleotide exchange factor for DnaK and may function as a thermosensor. Unfolded proteins bind initially to DnaJ; upon interaction with the DnaJ-bound protein, DnaK hydrolyzes its bound ATP, resulting in the formation of a stable complex. GrpE releases ADP from DnaK; ATP binding to DnaK triggers the release of the substrate protein, thus completing the reaction cycle. Several rounds of ATP-dependent interactions between DnaJ, DnaK and GrpE are required for fully efficient folding. The chain is Protein GrpE from Shewanella sp. (strain MR-7).